The chain runs to 287 residues: ATP synthase gamma chain (287 aa).

It belongs to the ATPase gamma chain family. As to quaternary structure, F-type ATPases have 2 components, CF(1) - the catalytic core - and CF(0) - the membrane proton channel. CF(1) has five subunits: alpha(3), beta(3), gamma(1), delta(1), epsilon(1). CF(0) has three main subunits: a, b and c.

The protein localises to the cell membrane. Produces ATP from ADP in the presence of a proton gradient across the membrane. The gamma chain is believed to be important in regulating ATPase activity and the flow of protons through the CF(0) complex. The protein is ATP synthase gamma chain of Mycoplasmopsis agalactiae (strain NCTC 10123 / CIP 59.7 / PG2) (Mycoplasma agalactiae).